Consider the following 320-residue polypeptide: Zinc finger protein 330 (320 aa).

The segment at 1 to 23 is disordered; sequence MPKKKTGARKKAENRREREKQLR. Positions 3–11 match the Nuclear localization signal motif; that stretch reads KKKTGARKK. Residues 10–22 show a composition bias toward basic and acidic residues; that stretch reads KKAENRREREKQL. 4 consecutive C4-type zinc fingers follow at residues 42–58, 67–104, 129–149, and 175–189; these read CDKC…CYFC, CAQC…CDFC, CVEC…CSFC, and CVSC…CLRC. 2 disordered regions span residues 206 to 250 and 264 to 303; these read EKGK…ASGY and GASY…TNLN. Basic and acidic residues predominate over residues 216–225; it reads CGHETQETKD. Positions 269–287 are enriched in acidic residues; it reads DEEEDEYEAEDDEEEEDEG. Position 291 is a phosphoserine (S291).

This sequence belongs to the NOA36 family.

The protein localises to the nucleus. It is found in the nucleolus. Its subcellular location is the chromosome. The protein resides in the centromere. The protein is Zinc finger protein 330 (ZNF330) of Bos taurus (Bovine).